The primary structure comprises 268 residues: uncharacterized protein (268 aa).

A helical membrane pass occupies residues 150-172 (LYSIADFLAYTFTYFYLATVGLA).

It is found in the host membrane. This is an uncharacterized protein from Sulfolobus islandicus rod-shaped virus 1 (SIRV-1).